An 83-amino-acid chain; its full sequence is Large ribosomal subunit protein bL31 (83 aa).

Belongs to the bacterial ribosomal protein bL31 family. Type A subfamily. In terms of assembly, part of the 50S ribosomal subunit.

Its function is as follows. Binds the 23S rRNA. The sequence is that of Large ribosomal subunit protein bL31 from Gloeothece citriformis (strain PCC 7424) (Cyanothece sp. (strain PCC 7424)).